The sequence spans 125 residues: Fluoride-specific ion channel FluC (125 aa).

A run of 4 helical transmembrane segments spans residues 1–21 (MFAT…ARYG), 34–54 (FPWA…FLFF), 72–92 (TGGL…LVLF), and 101–121 (LLYM…GAWI). Na(+) contacts are provided by Gly-76 and Thr-79.

The protein belongs to the fluoride channel Fluc/FEX (TC 1.A.43) family.

It is found in the cell inner membrane. The enzyme catalyses fluoride(in) = fluoride(out). With respect to regulation, na(+) is not transported, but it plays an essential structural role and its presence is essential for fluoride channel function. Its function is as follows. Fluoride-specific ion channel. Important for reducing fluoride concentration in the cell, thus reducing its toxicity. This Acidithiobacillus ferrooxidans (strain ATCC 23270 / DSM 14882 / CIP 104768 / NCIMB 8455) (Ferrobacillus ferrooxidans (strain ATCC 23270)) protein is Fluoride-specific ion channel FluC.